Reading from the N-terminus, the 756-residue chain is Protease KEX1 (756 aa).

An N-terminal signal peptide occupies residues 1-24 (MILSSQLMLALIAVSGYGKAMQVP). 3 N-linked (GlcNAc...) asparagine glycosylation sites follow: N121, N144, and N152. In terms of domain architecture, Peptidase S8 spans 130–440 (QWHLINPNYP…FGKLDAYNIV (311 aa)). Catalysis depends on charge relay system residues D164 and H202. 2 disulfides stabilise this stretch: C218–C365 and C310–C340. Catalysis depends on S373, which acts as the Charge relay system. N392 and N538 each carry an N-linked (GlcNAc...) asparagine glycan. Residues 449-583 (VNPQGWLYLP…RLKMFGETID (135 aa)) enclose the P/Homo B domain. Residues 599 to 632 (AEVKSTESKTTTPTAQTSSFTTTSGEETSGANKL) are disordered. Residues 606 to 628 (SKTTTPTAQTSSFTTTSGEETSG) show a composition bias toward low complexity. The chain crosses the membrane as a helical span at residues 641–661 (LYLAIFVIGAIVIIIYYLFFL). A disordered region spans residues 715 to 756 (EEELSPRESSSNNPFGNESLESFDNSPDHTSNLLGQNSIPNK). Residues 721-756 (RESSSNNPFGNESLESFDNSPDHTSNLLGQNSIPNK) show a composition bias toward polar residues.

Belongs to the peptidase S8 family. Furin subfamily. The cofactor is Ca(2+).

It localises to the membrane. Probably involved in the processing of the precursor of m1-toxin and alpha-factor. This Kluyveromyces lactis (strain ATCC 8585 / CBS 2359 / DSM 70799 / NBRC 1267 / NRRL Y-1140 / WM37) (Yeast) protein is Protease KEX1 (KEX1).